We begin with the raw amino-acid sequence, 306 residues long: Oxygen-dependent coproporphyrinogen-III oxidase (306 aa).

Position 94 (serine 94) interacts with substrate. Residues histidine 98 and histidine 108 each coordinate a divalent metal cation. Residue histidine 108 is the Proton donor of the active site. Substrate is bound at residue 110-112; the sequence is NVR. Residues histidine 147 and histidine 177 each contribute to the a divalent metal cation site. An important for dimerization region spans residues 242 to 277; that stretch reads YVEFNLVYDRGTLFGLQTGGRTESILMSMPPLVRWE. Residue 260 to 262 participates in substrate binding; sequence GGR.

It belongs to the aerobic coproporphyrinogen-III oxidase family. Homodimer. A divalent metal cation is required as a cofactor.

It localises to the cytoplasm. The catalysed reaction is coproporphyrinogen III + O2 + 2 H(+) = protoporphyrinogen IX + 2 CO2 + 2 H2O. It functions in the pathway porphyrin-containing compound metabolism; protoporphyrin-IX biosynthesis; protoporphyrinogen-IX from coproporphyrinogen-III (O2 route): step 1/1. Involved in the heme biosynthesis. Catalyzes the aerobic oxidative decarboxylation of propionate groups of rings A and B of coproporphyrinogen-III to yield the vinyl groups in protoporphyrinogen-IX. The sequence is that of Oxygen-dependent coproporphyrinogen-III oxidase from Shewanella woodyi (strain ATCC 51908 / MS32).